Consider the following 608-residue polypeptide: Granule-bound starch synthase 1, chloroplastic/amyloplastic (608 aa).

A chloroplast-targeting transit peptide spans 1–78 (MATVIAAHFV…NGRPAAKIIC (78 aa)). Residue K96 coordinates ADP-alpha-D-glucose. The disordered stretch occupies residues 587-608 (GSEPGTEGEEIAPLAKENVPTP).

Belongs to the glycosyltransferase 1 family. Bacterial/plant glycogen synthase subfamily. As to expression, synthesized in a number of different organs, but most abundantly in tubers.

It is found in the plastid. The protein resides in the chloroplast. The protein localises to the amyloplast. The catalysed reaction is an NDP-alpha-D-glucose + [(1-&gt;4)-alpha-D-glucosyl](n) = [(1-&gt;4)-alpha-D-glucosyl](n+1) + a ribonucleoside 5'-diphosphate + H(+). It participates in glycan biosynthesis; starch biosynthesis. In terms of biological role, responsible for the synthesis of amylose in reserve starch. The protein is Granule-bound starch synthase 1, chloroplastic/amyloplastic (WAXY) of Manihot esculenta (Cassava).